Here is a 336-residue protein sequence, read N- to C-terminus: UDP-glucose 4-epimerase (336 aa).

Residues 11-12 (YI), 31-36 (DNLINS), 58-59 (DI), 80-84 (FAGLK), asparagine 99, serine 124, tyrosine 149, lysine 153, and phenylalanine 178 each bind NAD(+). Residues serine 124 and tyrosine 149 each contribute to the substrate site. Tyrosine 149 functions as the Proton acceptor in the catalytic mechanism. Substrate contacts are provided by residues asparagine 179, 199 to 200 (NL), 216 to 218 (LVY), arginine 231, and 290 to 293 (RPGD).

It belongs to the NAD(P)-dependent epimerase/dehydratase family. In terms of assembly, homodimer. NAD(+) is required as a cofactor.

The catalysed reaction is UDP-alpha-D-glucose = UDP-alpha-D-galactose. It functions in the pathway carbohydrate metabolism; galactose metabolism. Its function is as follows. Involved in the metabolism of galactose. Catalyzes the conversion of UDP-galactose (UDP-Gal) to UDP-glucose (UDP-Glc) through a mechanism involving the transient reduction of NAD. The protein is UDP-glucose 4-epimerase (galE) of Yersinia enterocolitica.